The sequence spans 243 residues: Benzil reductase ((S)-benzoin forming) (243 aa).

Residues I6, N80, Y147, K151, and T184 each coordinate NADP(+). Catalysis depends on Y147, which acts as the Proton acceptor.

Belongs to the short-chain dehydrogenases/reductases (SDR) family.

Its subcellular location is the cytoplasm. It carries out the reaction (S)-benzoin + NADP(+) = benzil + NADPH + H(+). In terms of biological role, reduces benzil stereospecifically to (S)-benzoin. The protein is Benzil reductase ((S)-benzoin forming) (yueD) of Bacillus subtilis (strain 168).